Consider the following 89-residue polypeptide: MVDGRPMQITLNLPDRLNQIGEFDQNDWLREIAIALFEQEHISLARASKISSMEIMEFQKLLSDRGICIHYDVEELAQDIQHLQNRSWL.

The protein belongs to the UPF0175 family.

The sequence is that of UPF0175 protein ssl1255 from Synechocystis sp. (strain ATCC 27184 / PCC 6803 / Kazusa).